A 204-amino-acid polypeptide reads, in one-letter code: Large ribosomal subunit protein bL25 (204 aa).

Belongs to the bacterial ribosomal protein bL25 family. CTC subfamily. Part of the 50S ribosomal subunit; part of the 5S rRNA/L5/L18/L25 subcomplex. Contacts the 5S rRNA. Binds to the 5S rRNA independently of L5 and L18.

Its function is as follows. This is one of the proteins that binds to the 5S RNA in the ribosome where it forms part of the central protuberance. The sequence is that of Large ribosomal subunit protein bL25 from Pseudomonas paraeruginosa (strain DSM 24068 / PA7) (Pseudomonas aeruginosa (strain PA7)).